The chain runs to 114 residues: uncharacterized protein (114 aa).

Cys-10 is a catalytic residue.

This sequence belongs to the ArsC family.

This is an uncharacterized protein from Haemophilus influenzae (strain ATCC 51907 / DSM 11121 / KW20 / Rd).